We begin with the raw amino-acid sequence, 170 residues long: Chorion protein S18 (170 aa).

The N-terminal stretch at 1–17 (MMKFMCIFVCAIAAVSA) is a signal peptide. Residues 146 to 159 (AAAASSSVAGQHSG) are compositionally biased toward low complexity. The disordered stretch occupies residues 146 to 170 (AAAASSSVAGQHSGYKNSGYKNSSY). The segment covering 160–170 (YKNSGYKNSSY) has biased composition (polar residues).

Belongs to the chorion protein S15/S18 family.

It localises to the secreted. Its function is as follows. Chorion membrane (egg shell) protein; plays a role in protecting the egg from the environment. The polypeptide is Chorion protein S18 (Cp18) (Drosophila virilis (Fruit fly)).